We begin with the raw amino-acid sequence, 81 residues long: Photosystem I iron-sulfur center (81 aa).

4Fe-4S ferredoxin-type domains follow at residues 2–31 and 37–68; these read SHSVKIYNTCIGCTQCVRACPTDVLEMVPW and GQIASSPRTEDCVGCKRCESACPTDFLSVRVY. Positions 11, 14, 17, 21, 48, 51, 54, and 58 each coordinate [4Fe-4S] cluster.

As to quaternary structure, the eukaryotic PSI reaction center is composed of at least 11 subunits. [4Fe-4S] cluster serves as cofactor.

It localises to the plastid. Its subcellular location is the chloroplast thylakoid membrane. It carries out the reaction reduced [plastocyanin] + hnu + oxidized [2Fe-2S]-[ferredoxin] = oxidized [plastocyanin] + reduced [2Fe-2S]-[ferredoxin]. Apoprotein for the two 4Fe-4S centers FA and FB of photosystem I (PSI); essential for photochemical activity. FB is the terminal electron acceptor of PSI, donating electrons to ferredoxin. The C-terminus interacts with PsaA/B/D and helps assemble the protein into the PSI complex. Required for binding of PsaD and PsaE to PSI. PSI is a plastocyanin/cytochrome c6-ferredoxin oxidoreductase, converting photonic excitation into a charge separation, which transfers an electron from the donor P700 chlorophyll pair to the spectroscopically characterized acceptors A0, A1, FX, FA and FB in turn. This Euglena gracilis protein is Photosystem I iron-sulfur center.